The sequence spans 168 residues: Photosystem I assembly protein Ycf3 (168 aa).

TPR repeat units lie at residues 35 to 68 (AFAY…EMDP), 72 to 105 (SYIL…NPFL), and 120 to 153 (GEQA…TPDN).

It belongs to the Ycf3 family.

It localises to the plastid membrane. Essential for the assembly of the photosystem I (PSI) complex. May act as a chaperone-like factor to guide the assembly of the PSI subunits. This Cuscuta obtusiflora (Peruvian dodder) protein is Photosystem I assembly protein Ycf3.